Consider the following 167-residue polypeptide: MIRLSLFISLLLTSVAVLADVQINIRGNVYIPPCTINNGQNIVVDFGNINPEHVDNSRGEVTKNISISCPYKSGSLWIKVTGNTMGVGQNNVLATNITHFGIALYQGKGMSTPLTLGNGSGNGYRVTAGLDTARSTFTFTSVPFRNGSGILNGGDFRTTASMSMIYN.

An N-terminal signal peptide occupies residues 1–18 (MIRLSLFISLLLTSVAVL).

The protein localises to the secreted. Its subcellular location is the fimbrium. Functionally, fimbriae (also called pili), polar filaments radiating from the surface of the bacterium to a length of 0.5-1.5 micrometers and numbering 100-300 per cell, enable bacteria to colonize the epithelium of specific host organs. This is Minor fimbrial protein PrsF (prsF) from Escherichia coli.